A 311-amino-acid chain; its full sequence is Cytochrome f (311 aa).

The first 27 residues, 1 to 27 (MKHFFKSLTLAIALAASVLFWSPQAQA), serve as a signal peptide directing secretion. The heme site is built by Tyr-28, Cys-48, Cys-51, and His-52. Residues 279-296 (WLLVFFAAITLSQILLVL) traverse the membrane as a helical segment.

It belongs to the cytochrome f family. The 4 large subunits of the cytochrome b6-f complex are cytochrome b6, subunit IV (17 kDa polypeptide, PetD), cytochrome f and the Rieske protein, while the 4 small subunits are PetG, PetL, PetM and PetN. The complex functions as a dimer. It depends on heme as a cofactor.

It localises to the cellular thylakoid membrane. Its function is as follows. Component of the cytochrome b6-f complex, which mediates electron transfer between photosystem II (PSII) and photosystem I (PSI), cyclic electron flow around PSI, and state transitions. The chain is Cytochrome f from Synechococcus elongatus.